A 190-amino-acid chain; its full sequence is Elongation factor P (190 aa).

K34 is subject to N6-(3,6-diaminohexanoyl)-5-hydroxylysine.

The protein belongs to the elongation factor P family. In terms of processing, may be beta-lysylated on the epsilon-amino group of Lys-34 by the combined action of EpmA and EpmB, and then hydroxylated on the C5 position of the same residue by EpmC (if this protein is present). Lysylation is critical for the stimulatory effect of EF-P on peptide-bond formation. The lysylation moiety may extend toward the peptidyltransferase center and stabilize the terminal 3-CCA end of the tRNA. Hydroxylation of the C5 position on Lys-34 may allow additional potential stabilizing hydrogen-bond interactions with the P-tRNA.

It localises to the cytoplasm. The protein operates within protein biosynthesis; polypeptide chain elongation. Its function is as follows. Involved in peptide bond synthesis. Alleviates ribosome stalling that occurs when 3 or more consecutive Pro residues or the sequence PPG is present in a protein, possibly by augmenting the peptidyl transferase activity of the ribosome. Modification of Lys-34 is required for alleviation. In Hahella chejuensis (strain KCTC 2396), this protein is Elongation factor P.